Consider the following 269-residue polypeptide: uncharacterized protein (269 aa).

The region spanning 14-89 is the ACT domain; the sequence is FEYEIQVNRP…KLREPRLRDR (76 aa).

This is an uncharacterized protein from Bacillus subtilis (strain 168).